The chain runs to 130 residues: Mediator of RNA polymerase II transcription subunit 31 (130 aa).

Belongs to the Mediator complex subunit 31 family. In terms of assembly, component of the Mediator complex.

It is found in the nucleus. Its function is as follows. Component of the Mediator complex, a coactivator involved in the regulated transcription of nearly all RNA polymerase II-dependent genes. Mediator functions as a bridge to convey information from gene-specific regulatory proteins to the basal RNA polymerase II transcription machinery. Mediator is recruited to promoters by direct interactions with regulatory proteins and serves as a scaffold for the assembly of a functional preinitiation complex with RNA polymerase II and the general transcription factors. This chain is Mediator of RNA polymerase II transcription subunit 31 (SOH1), found in Candida glabrata (strain ATCC 2001 / BCRC 20586 / JCM 3761 / NBRC 0622 / NRRL Y-65 / CBS 138) (Yeast).